Reading from the N-terminus, the 1073-residue chain is Envelopment polyprotein (1073 aa).

The first 19 residues, 1 to 19 (MMKVIWFSSLICFVIQCSG), serve as a signal peptide directing secretion. Residues 20-453 (DSGPIICAGP…NPQCYPAKKW (434 aa)) lie on the Lumenal side of the membrane. Residues C26 and C49 are joined by a disulfide bond. 2 N-linked (GlcNAc...) asparagine; by host glycosylation sites follow: N33 and N63. 10 disulfides stabilise this stretch: C143-C156, C180-C327, C206-C216, C258-C305, C266-C303, C274-C280, C287-C292, C349-C352, C356-C424, and C376-C381. The helical transmembrane segment at 454–474 (LFIIIVILLGYAGLMLLTNVL) threads the bilayer. The tract at residues 475 to 521 (KAIGIWGSWVIAPVKLMFAIIKKLMRTVSCLMRKLMDRGRQVIHEEI) is golgi retention signal. The Cytoplasmic portion of the chain corresponds to 475-535 (KAIGIWGSWV…EGNQDDVRIE (61 aa)). Residues 536–562 (MARPRRVRHWMYSPVILTILAIGLAES) form an internal signal sequence for glycoprotein C region. Disulfide bonds link C563–C604, C576–C586, C629–C725, C644–C841, C650–C698, C656–C705, C660–C687, C691–C696, C778–C793, and C809–C823. The Lumenal segment spans residues 563 to 1036 (CDEMVHADSK…ALFGNGLSRW (474 aa)). The fusion loop stretch occupies residues 650 to 656 (CRWAGDC). The fusion loop stretch occupies residues 691 to 705 (CGGAACGCFNAAPSC). N853 and N914 each carry an N-linked (GlcNAc...) asparagine; by host glycan. 3 cysteine pairs are disulfide-bonded: C908–C978, C918–C921, and C943–C974. Residue N936 is glycosylated (N-linked (GlcNAc...) asparagine; by host). The chain crosses the membrane as a helical span at residues 1037 to 1057 (ILGVIGVLLGGLALFFMIMSL). The Cytoplasmic portion of the chain corresponds to 1058–1073 (FKLGTKQVFRSRTKLA).

The protein belongs to the phlebovirus envelope glycoprotein family. In terms of assembly, homodimer. Heterodimer with glycoprotein C. Homotrimer (postfusion). As to quaternary structure, heterodimer with glycoprotein N. Specific enzymatic cleavages in vivo yield mature proteins including glycoprotein C and glycoprotein N. In terms of processing, the cytoplasmic tail is Palmitoylated. Post-translationally, glycosylated. Palmitoylated.

The protein localises to the virion membrane. Its subcellular location is the host Golgi apparatus membrane. It localises to the host endoplasmic reticulum membrane. Its function is as follows. Structural component of the virion that interacts with glycoprotein C. It shields the hydrophobic fusion loops of the glycoprotein C, preventing premature fusion. The glycoprotein protrusions are arranged on an icosahedral lattice, with T=12 triangulation. They are able to attach the virion to the host cell receptor CD209/DC-SIGN and to promote fusion of membranes with the late endosome after clathrin-mediated endocytosis of the virion. Plays a role in the packaging of ribonucleoproteins during virus assembly. Structural component of the virion that interacts with glycoprotein N. Acts as a class II fusion protein that is activated upon acidification and subsequent repositioning of the glycoprotein N. The glycoprotein protrusions are arranged on an icosahedral lattice, with T=12 triangulation. They are able to attach the virion to the host cell receptor CD209/DC-SIGN and to promote fusion of membranes with the late endosome after clathrin-mediated endocytosis of the virion. The polypeptide is Envelopment polyprotein (Dabie bandavirus (Severe fever with thrombocytopenia virus)).